We begin with the raw amino-acid sequence, 266 residues long: Protein-ADP-ribose hydrolase (266 aa).

Residues 74–265 (TDLKDLKPIK…LYKEAFNRDA (192 aa)) form the Macro domain. 3 residues coordinate ADP-D-ribose: D93, I94, and N107. Residues C113, H118, and C120 each contribute to the Zn(2+) site. Positions 120, 121, 122, 212, 213, 214, and 216 each coordinate ADP-D-ribose.

This sequence belongs to the MacroD-type family. Zn-Macro subfamily. The cofactor is Zn(2+).

It carries out the reaction 4-O-(ADP-D-ribosyl)-L-aspartyl-[protein] + H2O = L-aspartyl-[protein] + ADP-D-ribose + H(+). Functionally, ADP-ribosylhydrolase that specifically reverses the SirTM-mediated mono-ADP-ribosylation at an asparatate residue of GcvH-L, by releasing ADP-ribose from the target protein. May play a role in the regulation of the response to host-induced oxidative stress. The protein is Protein-ADP-ribose hydrolase of Staphylococcus aureus (strain MRSA252).